The following is a 252-amino-acid chain: Large ribosomal subunit protein uL4 (252 aa).

The protein belongs to the universal ribosomal protein uL4 family. Part of the 50S ribosomal subunit.

One of the primary rRNA binding proteins, this protein initially binds near the 5'-end of the 23S rRNA. It is important during the early stages of 50S assembly. It makes multiple contacts with different domains of the 23S rRNA in the assembled 50S subunit and ribosome. Functionally, forms part of the polypeptide exit tunnel. The chain is Large ribosomal subunit protein uL4 from Methanococcus maripaludis (strain C7 / ATCC BAA-1331).